The sequence spans 491 residues: Cobyric acid synthase (491 aa).

The GATase cobBQ-type domain occupies 251–444; the sequence is GITIAVIRLP…LHGLFTNDEF (194 aa). Catalysis depends on Cys-329, which acts as the Nucleophile. His-436 is a catalytic residue.

The protein belongs to the CobB/CobQ family. CobQ subfamily.

It functions in the pathway cofactor biosynthesis; adenosylcobalamin biosynthesis. Functionally, catalyzes amidations at positions B, D, E, and G on adenosylcobyrinic A,C-diamide. NH(2) groups are provided by glutamine, and one molecule of ATP is hydrogenolyzed for each amidation. This is Cobyric acid synthase from Chloroflexus aggregans (strain MD-66 / DSM 9485).